The following is a 350-amino-acid chain: Nicotinate-nucleotide--dimethylbenzimidazole phosphoribosyltransferase (350 aa).

Glu-317 acts as the Proton acceptor in catalysis.

The protein belongs to the CobT family.

It carries out the reaction 5,6-dimethylbenzimidazole + nicotinate beta-D-ribonucleotide = alpha-ribazole 5'-phosphate + nicotinate + H(+). Its pathway is nucleoside biosynthesis; alpha-ribazole biosynthesis; alpha-ribazole from 5,6-dimethylbenzimidazole: step 1/2. Its function is as follows. Catalyzes the synthesis of alpha-ribazole-5'-phosphate from nicotinate mononucleotide (NAMN) and 5,6-dimethylbenzimidazole (DMB). This Shewanella sp. (strain W3-18-1) protein is Nicotinate-nucleotide--dimethylbenzimidazole phosphoribosyltransferase.